We begin with the raw amino-acid sequence, 441 residues long: Cortexillin-2 (441 aa).

The actin-binding stretch occupies residues 1 to 229; the sequence is MDLNKEWEKV…VLYTSLFFHA (229 aa). Calponin-homology (CH) domains are found at residues 9–117 and 126–231; these read KVQE…RKYR and KSSE…HAFR. 2 coiled-coil regions span residues 229–362 and 406–430; these read AFRA…RLGL and SFEEQAKKLASKLESENILIEKYLN.

Belongs to the cortexillin family. Homodimer; parallel.

The protein localises to the cytoplasm. It localises to the cytoskeleton. Its function is as follows. Actin-bundling protein. When linked to F-actin the actin filaments form preferentially anti-parallel bundles that associate into meshworks. Plays a major role in cytokinesis. Negatively regulates cortical localization of rapgap1. This is Cortexillin-2 (ctxB) from Dictyostelium discoideum (Social amoeba).